Reading from the N-terminus, the 1364-residue chain is RecQ-like DNA helicase BLM (1364 aa).

Disordered stretches follow at residues 108–131 and 147–174; these read VHGN…TGIN and DDFD…KNTS. The interval 328 to 377 is necessary for dimerization and homooligomerization; the sequence is DSKVPSQLLTLMLEICDLVDKIPISELHVLSCGLDLKKKRDMRKRLLSND. Disordered regions lie at residues 380-416, 484-515, and 535-580; these read FRSS…ESLS, RFNT…NPDL, and SPAA…SLLS. The segment covering 387–399 has biased composition (low complexity); that stretch reads SSTVSLTSCTSST. Residues 484–503 are compositionally biased toward polar residues; it reads RFNTPQNEKPISSSTCTRPY. A compositionally biased stretch (basic and acidic residues) spans 555–566; it reads AQLDSRNKEKNT. Over residues 567–580 the composition is skewed to polar residues; it reads RNNTGDTTNPSLLS. ATP contacts are provided by residues 620 to 624 and 644 to 648; these read FRTNQ and GGGKS. A Helicase ATP-binding domain is found at 628–803; sequence INACLCGEDC…LNQLKMTKPQ (176 aa). The short motif at 747-750 is the DEAH box element; the sequence is DEAH. 3' overhang DNA-binding stretches follow at residues 822–825 and 849–851; these read KPKR and SRH. Residues 829 to 976 enclose the Helicase C-terminal domain; sequence DCVEWIKKHH…TKQTHFNNLY (148 aa). Residue arginine 934 participates in ATP binding. Residues 952-955 form a 3' overhang DNA-binding region; sequence RIRR. Residues cysteine 988, cysteine 1007, cysteine 1015, and cysteine 1018 each contribute to the Zn(2+) site. A DNA Holliday junction binding region spans residues 1046 to 1090; it reads LVQGRGKGRSNNTRLTLNMMVDIFLGSKSAKIQTGLFGKGAAYSR. 3' overhang DNA-binding regions lie at residues 1061–1063, 1072–1076, and 1111–1117; these read TLN, SKSAK, and YITFNDQ. The 81-residue stretch at 1164-1244 folds into the HRDC domain; sequence EEMVKKCQAE…QKYSEWTLPV (81 aa). The tract at residues 1179–1196 is necessary for ssDNA and DNA Holliday junction binding; sequence KRLGKIFGVHYFNIFNTA. Asparagine 1194 contributes to the ATP binding site. The interval 1251-1364 is disordered; that stretch reads SGGPANVSAR…RFLKPSYSMF (114 aa). The segment covering 1273-1282 has biased composition (polar residues); it reads KSSYFSSNNK. Positions 1283–1300 are enriched in basic residues; it reads KGPKRKNSSYFGKSKKRK. Positions 1285–1301 match the Nuclear localization signal motif; sequence PKRKNSSYFGKSKKRKT. Polar residues predominate over residues 1306–1335; the sequence is QQSRSKNGNSSYARKNSTAKTSSSYISGSK.

Belongs to the helicase family. RecQ subfamily. As to quaternary structure, monomer. Homodimer (via N-terminus). Homotetramer (via N-terminus); dimer of dimers. Homohexamer (via N-terminus). Self-association negatively regulates DNA unwinding amplitude and rate. Oligomer complexes dissociate into monomer in presence of ATP. The cofactor is Zn(2+).

The protein resides in the nucleus. It carries out the reaction Couples ATP hydrolysis with the unwinding of duplex DNA by translocating in the 3'-5' direction.. The enzyme catalyses ATP + H2O = ADP + phosphate + H(+). Functionally, ATP-dependent DNA helicase that unwinds single- and double-stranded DNA in a 3'-5' direction. Participates in DNA replication and repair. Involved in 5'-end resection of DNA during double-strand break (DSB) repair. Negatively regulates sister chromatid exchange (SCE). Stimulates DNA 4-way junction branch migration and DNA Holliday junction dissolution. Binds single-stranded DNA (ssDNA), forked duplex DNA and DNA Holliday junction. The sequence is that of RecQ-like DNA helicase BLM (blm) from Xenopus laevis (African clawed frog).